Consider the following 435-residue polypeptide: Zinc finger and BTB domain-containing protein 25 (435 aa).

The BTB domain occupies 1 to 107 (MDTASHSLVL…GIRFLHADYL (107 aa)). Residues Lys-142, Lys-148, Lys-198, and Lys-204 each participate in a glycyl lysine isopeptide (Lys-Gly) (interchain with G-Cter in SUMO2) cross-link. Residues 238–260 (HLCHYCGERFDSRSNLRQHLHTH) form a C2H2-type 1 zinc finger. Glycyl lysine isopeptide (Lys-Gly) (interchain with G-Cter in SUMO2) cross-links involve residues Lys-303 and Lys-330. A C2H2-type 2 zinc finger spans residues 349 to 371 (MSCTICGHKFPRKSQLLEHMYTH). Lys-405 participates in a covalent cross-link: Glycyl lysine isopeptide (Lys-Gly) (interchain with G-Cter in SUMO2).

Expressed mainly in hematopoietic cells and testis.

The protein resides in the nucleus. May be involved in transcriptional regulation. This chain is Zinc finger and BTB domain-containing protein 25 (ZBTB25), found in Homo sapiens (Human).